The sequence spans 446 residues: Tubulin beta-1 chain (446 aa).

Positions 11, 69, 138, 142, 143, 144, 204, and 226 each coordinate GTP. Position 69 (Glu69) interacts with Mg(2+). The segment at 422-446 is disordered; the sequence is YQQYQDATADEEGEYEDEEEGDLQD. Positions 429–446 are enriched in acidic residues; sequence TADEEGEYEDEEEGDLQD.

This sequence belongs to the tubulin family. As to quaternary structure, dimer of alpha and beta chains. A typical microtubule is a hollow water-filled tube with an outer diameter of 25 nm and an inner diameter of 15 nM. Alpha-beta heterodimers associate head-to-tail to form protofilaments running lengthwise along the microtubule wall with the beta-tubulin subunit facing the microtubule plus end conferring a structural polarity. Microtubules usually have 13 protofilaments but different protofilament numbers can be found in some organisms and specialized cells. The cofactor is Mg(2+). In terms of tissue distribution, found in areas of rapidly dividing tissues.

Its subcellular location is the cytoplasm. It is found in the cytoskeleton. In terms of biological role, tubulin is the major constituent of microtubules, a cylinder consisting of laterally associated linear protofilaments composed of alpha- and beta-tubulin heterodimers. Microtubules grow by the addition of GTP-tubulin dimers to the microtubule end, where a stabilizing cap forms. Below the cap, tubulin dimers are in GDP-bound state, owing to GTPase activity of alpha-tubulin. In Zea mays (Maize), this protein is Tubulin beta-1 chain (TUBB1).